Reading from the N-terminus, the 140-residue chain is Small ribosomal subunit protein uS19 (140 aa).

This sequence belongs to the universal ribosomal protein uS19 family.

Functionally, protein S19 forms a complex with S13 that binds strongly to the 16S ribosomal RNA. The chain is Small ribosomal subunit protein uS19 (rps19) from Sulfurisphaera tokodaii (strain DSM 16993 / JCM 10545 / NBRC 100140 / 7) (Sulfolobus tokodaii).